Reading from the N-terminus, the 506-residue chain is NAD(P)H-quinone oxidoreductase chain 4, chloroplastic (506 aa).

The next 14 membrane-spanning stretches (helical) occupy residues 5–25 (FPLL…IPFL), 35–55 (WYTL…FIYK), 88–108 (MPLI…AWPI), 114–134 (LFYF…LSQD), 135–155 (ILLF…LLSL), 168–188 (FILY…TMAF), 209–229 (ALEI…LPAF), 243–263 (HYST…YGLI), 275–295 (VIFS…GALT), 309–329 (SSIS…DLGL), 331–351 (GAMM…FLAG), 386–406 (SLAL…LGFL), 415–435 (FIAL…IYLL), and 463–483 (IFIM…PNLT).

The protein belongs to the complex I subunit 4 family.

It is found in the plastid. It localises to the chloroplast thylakoid membrane. The catalysed reaction is a plastoquinone + NADH + (n+1) H(+)(in) = a plastoquinol + NAD(+) + n H(+)(out). It carries out the reaction a plastoquinone + NADPH + (n+1) H(+)(in) = a plastoquinol + NADP(+) + n H(+)(out). The protein is NAD(P)H-quinone oxidoreductase chain 4, chloroplastic of Chaetosphaeridium globosum (Charophycean green alga).